A 329-amino-acid polypeptide reads, in one-letter code: Tryptophan--tRNA ligase (329 aa).

ATP is bound by residues 9–11 (QPS) and 17–18 (GN). Positions 10-18 (PSGIPTIGN) match the 'HIGH' region motif. L-tryptophan is bound at residue aspartate 133. ATP contacts are provided by residues 145 to 147 (GDD), valine 184, and 193 to 197 (KMSKS). The short motif at 193–197 (KMSKS) is the 'KMSKS' region element.

The protein belongs to the class-I aminoacyl-tRNA synthetase family. In terms of assembly, homodimer.

It is found in the cytoplasm. The catalysed reaction is tRNA(Trp) + L-tryptophan + ATP = L-tryptophyl-tRNA(Trp) + AMP + diphosphate + H(+). Catalyzes the attachment of tryptophan to tRNA(Trp). This chain is Tryptophan--tRNA ligase, found in Staphylococcus epidermidis (strain ATCC 35984 / DSM 28319 / BCRC 17069 / CCUG 31568 / BM 3577 / RP62A).